The following is a 353-amino-acid chain: Methionine import ATP-binding protein MetN (353 aa).

Residues 6–249 form the ABC transporter domain; sequence LKNVDVDFPQ…PKQELTKKFV (244 aa). Residue 41–48 coordinates ATP; that stretch reads GFSGAGKS.

This sequence belongs to the ABC transporter superfamily. Methionine importer (TC 3.A.1.24) family. The complex is composed of two ATP-binding proteins (MetN), two transmembrane proteins (MetI) and a solute-binding protein (MetQ).

Its subcellular location is the cell membrane. The enzyme catalyses L-methionine(out) + ATP + H2O = L-methionine(in) + ADP + phosphate + H(+). The catalysed reaction is D-methionine(out) + ATP + H2O = D-methionine(in) + ADP + phosphate + H(+). Functionally, part of the ABC transporter complex MetNIQ involved in methionine import. Responsible for energy coupling to the transport system. The protein is Methionine import ATP-binding protein MetN of Lactobacillus acidophilus (strain ATCC 700396 / NCK56 / N2 / NCFM).